A 230-amino-acid chain; its full sequence is Iron-dependent repressor IdeR (230 aa).

Positions 4–65 constitute an HTH dtxR-type domain; it reads LVDTTEMYLR…VAGDRHLELT (62 aa).

The protein belongs to the DtxR/MntR family. Homodimer.

Its subcellular location is the cytoplasm. Functionally, metal-dependent DNA-binding protein that controls transcription of many genes involved in iron metabolism. The protein is Iron-dependent repressor IdeR (ideR) of Mycobacterium bovis (strain ATCC BAA-935 / AF2122/97).